We begin with the raw amino-acid sequence, 281 residues long: Phosphoglycerate mutase-like protein AT74H (281 aa).

His-17 acts as the Tele-phosphohistidine intermediate in catalysis. Glu-109 functions as the Proton donor/acceptor in the catalytic mechanism.

This sequence belongs to the phosphoglycerate mutase family.

May play a role in carbohydrates metabolism. The sequence is that of Phosphoglycerate mutase-like protein AT74H from Arabidopsis thaliana (Mouse-ear cress).